We begin with the raw amino-acid sequence, 93 residues long: Pancreatic polypeptide prohormone (93 aa).

A signal peptide spans methionine 1–glycine 29. Tyrosine 65 carries the tyrosine amide modification. A propeptide spanning residues glutamate 89 to glutamate 93 is cleaved from the precursor.

It belongs to the NPY family.

The protein localises to the secreted. In terms of biological role, hormone secreted by pancreatic cells that acts as a regulator of pancreatic and gastrointestinal functions probably by signaling through the G protein-coupled receptor NPY4R2. This Canis lupus familiaris (Dog) protein is Pancreatic polypeptide prohormone (PPY).